A 921-amino-acid chain; its full sequence is Levanase (921 aa).

The first 23 residues, 1–23 (MMKWFAKLILSLSLAVVMAASSA), serve as a signal peptide directing secretion. Residues 409 to 412 (SASD), glutamine 428, 460 to 461 (WS), 539 to 540 (RD), glutamate 591, and tryptophan 679 each bind substrate. Residue aspartate 412 is part of the active site.

This sequence belongs to the glycosyl hydrolase 32 family.

The protein localises to the secreted. The catalysed reaction is Random hydrolysis of (2-&gt;6)-beta-D-fructofuranosidic linkages in (2-&gt;6)-beta-D-fructans (levans) containing more than 3 fructose units.. Its activity is regulated as follows. Is completely inhibited by low concentrations of heavy metal ions, while Ca(2+) and Mg(2+) or chelating agents such as EDTA neither inhibit nor activate the enzyme to any significant extent. Catalyzes the hydrolysis of levan with endo-type specificity. The products of levan hydrolysis are a mixture of fructose and a series of fructooligosaccharides up to 12-mer, with levantriose being the major oligosaccharide obtained. Is not active towards sucrose. This chain is Levanase, found in Bacillus sp. (strain L7).